Reading from the N-terminus, the 412-residue chain is NAD-dependent dihydropyrimidine dehydrogenase subunit PreT (412 aa).

Glutamate 286 lines the NAD(+) pocket.

The protein belongs to the NADH dehydrogenase family. Heterotetramer of 2 PreA and 2 PreT subunits.

The enzyme catalyses 5,6-dihydrouracil + NAD(+) = uracil + NADH + H(+). It carries out the reaction 5,6-dihydrothymine + NAD(+) = thymine + NADH + H(+). In terms of biological role, involved in pyrimidine base degradation. Catalyzes physiologically the reduction of uracil to 5,6-dihydrouracil (DHU) by using NADH as a specific cosubstrate. It also catalyzes the reverse reaction and the reduction of thymine to 5,6-dihydrothymine (DHT). In Escherichia coli (strain K12), this protein is NAD-dependent dihydropyrimidine dehydrogenase subunit PreT (preT).